Consider the following 439-residue polypeptide: Transcription factor pydF (439 aa).

Basic and acidic residues predominate over residues 1–18 (MGRPQRADKQRRETDGPQ). 3 disordered regions span residues 1–53 (MGRP…GYAR), 143–177 (HVEKATAERPGNDGSSSPSSSLLRTSSSPSQQAVE), and 239–262 (AFRDGQNNGTSRPNTAASQNMQQH). The segment covering 20–35 (SRPSLTQAQKNSTTIR) has biased composition (polar residues). The segment covering 143-153 (HVEKATAERPG) has biased composition (basic and acidic residues). Over residues 157–172 (SSSPSSSLLRTSSSPS) the composition is skewed to low complexity. A compositionally biased stretch (polar residues) spans 243-260 (GQNNGTSRPNTAASQNMQ).

The protein localises to the nucleus. Its function is as follows. Transcription factor; part of the gene cluster that mediates the biosynthesis of pyrrocidines, fungal natural products containing a macrocyclic para-cyclophane connected to a decahydrofluorene ring system that show potent antibiotic activities toward Gram-negative bacteria. The protein is Transcription factor pydF of Acremonium sp.